Reading from the N-terminus, the 148-residue chain is Gas vesicle protein J (148 aa).

2 disordered regions span residues 1-21 (MTTTPIHPTRPQTNSNRVIPT) and 118-148 (EETTLTANNPEDLQPMYEVNSQEGDNSQLEA). Positions 136-148 (VNSQEGDNSQLEA) are enriched in polar residues.

This sequence belongs to the gas vesicle GvpA family. Interacts with GvpA.

The protein localises to the gas vesicle. In terms of biological role, a minor component of the gas vesicle, might be involved in nucleating gas vesicle formation. Gas vesicles (GV) are hollow, gas filled proteinaceous nanostructures. During planktonic growth they allow positioning of the organism at a favorable depth for light or nutrient acquisition. Cluster expression in E.coli (gvpA1-gvpA2-gvpC-gvpN-gvpJ-gvpK-gvpF-gvpG-gvpV-gvpW) allows cells to float and produces irregularly shaped gas vesicles. This is Gas vesicle protein J from Nostoc sp. (strain PCC 7120 / SAG 25.82 / UTEX 2576).